A 234-amino-acid polypeptide reads, in one-letter code: Sugar fermentation stimulation protein A (234 aa).

A DNA-binding region (H-T-H motif) is located at residues 201–220; the sequence is LLSEAQQRGVEILAYKAEIS.

This sequence belongs to the SfsA family.

Functionally, binds to DNA non-specifically. Could be a regulatory factor involved in maltose metabolism. The protein is Sugar fermentation stimulation protein A of Shigella sonnei (strain Ss046).